Here is a 192-residue protein sequence, read N- to C-terminus: UPF0312 protein ECA1782 (192 aa).

The signal sequence occupies residues 1–23 (MLKKTLLSLTAVSMLASAGSALA).

This sequence belongs to the UPF0312 family. Type 1 subfamily.

It is found in the periplasm. The chain is UPF0312 protein ECA1782 from Pectobacterium atrosepticum (strain SCRI 1043 / ATCC BAA-672) (Erwinia carotovora subsp. atroseptica).